Reading from the N-terminus, the 299-residue chain is GTPase Era (299 aa).

The Era-type G domain maps to 9–177; it reads RSGSVAVIGR…VGDLLKLVPE (169 aa). A G1 region spans residues 17–24; the sequence is GRPNVGKS. Position 17-24 (17-24) interacts with GTP; sequence GRPNVGKS. Residues 43-47 form a G2 region; the sequence is QTTRH. The tract at residues 64-67 is G3; that stretch reads DTPG. GTP-binding positions include 64-68 and 126-129; these read DTPGL and NKVD. Residues 126–129 are G4; it reads NKVD. The interval 156–158 is G5; it reads VSA. The KH type-2 domain occupies 200-284; it reads VREQLMRQLG…FLETWVRVRE (85 aa).

Belongs to the TRAFAC class TrmE-Era-EngA-EngB-Septin-like GTPase superfamily. Era GTPase family. As to quaternary structure, monomer.

It localises to the cytoplasm. Its subcellular location is the cell inner membrane. Functionally, an essential GTPase that binds both GDP and GTP, with rapid nucleotide exchange. Plays a role in 16S rRNA processing and 30S ribosomal subunit biogenesis and possibly also in cell cycle regulation and energy metabolism. This is GTPase Era from Xanthomonas axonopodis pv. citri (strain 306).